We begin with the raw amino-acid sequence, 573 residues long: DNA ligase (573 aa).

Glutamate 250 contributes to the ATP binding site. The N6-AMP-lysine intermediate role is filled by lysine 252. ATP is bound by residues arginine 257, arginine 272, glutamate 301, phenylalanine 342, arginine 432, and lysine 438.

It belongs to the ATP-dependent DNA ligase family. Mg(2+) serves as cofactor.

The catalysed reaction is ATP + (deoxyribonucleotide)n-3'-hydroxyl + 5'-phospho-(deoxyribonucleotide)m = (deoxyribonucleotide)n+m + AMP + diphosphate.. Functionally, DNA ligase that seals nicks in double-stranded DNA during DNA replication, DNA recombination and DNA repair. This chain is DNA ligase, found in Methanococcus maripaludis (strain C5 / ATCC BAA-1333).